The sequence spans 687 residues: C-mannosyltransferase dpy-19 (687 aa).

11 helical membrane passes run 24–44 (GISG…VGFL), 170–190 (ITGV…LGVL), 191–211 (VSDS…NHGE), 223–243 (ESFA…IIKY), 253–273 (LLIS…FAFF), 276–296 (ICSI…AKTI), 303–323 (AFFI…ALYF), 324–344 (PSIW…GIRL), 347–367 (LYLL…KVGF), 415–435 (LSST…SWDF), and 454–474 (GEVI…VLIM).

This sequence belongs to the dpy-19 family.

The protein localises to the endoplasmic reticulum membrane. In terms of biological role, C-mannosyltransferase that mediates C-mannosylation of tryptophan residues on target proteins such as unc-5 and mig-21. Mediates the attachment of alpha-mannose in C-C linkage to the C2 of the indole ring of tryptophan. C-mannosylation takes place in the endoplasmic reticulum and frequently found in thrombospondin (TSP) type-1 repeats and in the WSXWS motif of type I cytokine receptors. Required to orient neuroblasts QL and QR correctly on the anterior/posterior (A/P) axis: QL and QR are born in the same A/P position, but polarize and migrate left/right asymmetrically, QL migrates toward the posterior and QR migrates toward the anterior. Required with unc-40 to express mab-5 correctly in the Q cell descendants. The chain is C-mannosyltransferase dpy-19 from Caenorhabditis briggsae.